A 463-amino-acid polypeptide reads, in one-letter code: tRNA-2-methylthio-N(6)-dimethylallyladenosine synthase (463 aa).

In terms of domain architecture, MTTase N-terminal spans 19–135 (GSYWITTFGC…LESLLNQVDS (117 aa)). C28, C64, C98, C170, C174, and C177 together coordinate [4Fe-4S] cluster. The Radical SAM core domain occupies 156 to 393 (RDSSFCGWVN…NSLVENIAKE (238 aa)). The 68-residue stretch at 396-463 (QRYKNTSQEI…RPFSLTAKLL (68 aa)) folds into the TRAM domain.

It belongs to the methylthiotransferase family. MiaB subfamily. Monomer. Requires [4Fe-4S] cluster as cofactor.

It is found in the cytoplasm. It carries out the reaction N(6)-dimethylallyladenosine(37) in tRNA + (sulfur carrier)-SH + AH2 + 2 S-adenosyl-L-methionine = 2-methylsulfanyl-N(6)-dimethylallyladenosine(37) in tRNA + (sulfur carrier)-H + 5'-deoxyadenosine + L-methionine + A + S-adenosyl-L-homocysteine + 2 H(+). In terms of biological role, catalyzes the methylthiolation of N6-(dimethylallyl)adenosine (i(6)A), leading to the formation of 2-methylthio-N6-(dimethylallyl)adenosine (ms(2)i(6)A) at position 37 in tRNAs that read codons beginning with uridine. This is tRNA-2-methylthio-N(6)-dimethylallyladenosine synthase from Prochlorococcus marinus (strain NATL1A).